The sequence spans 254 residues: Pyrroloquinoline-quinone synthase (254 aa).

Belongs to the PqqC family.

The enzyme catalyses 6-(2-amino-2-carboxyethyl)-7,8-dioxo-1,2,3,4,7,8-hexahydroquinoline-2,4-dicarboxylate + 3 O2 = pyrroloquinoline quinone + 2 H2O2 + 2 H2O + H(+). It functions in the pathway cofactor biosynthesis; pyrroloquinoline quinone biosynthesis. In terms of biological role, ring cyclization and eight-electron oxidation of 3a-(2-amino-2-carboxyethyl)-4,5-dioxo-4,5,6,7,8,9-hexahydroquinoline-7,9-dicarboxylic-acid to PQQ. This chain is Pyrroloquinoline-quinone synthase, found in Rhodopseudomonas palustris (strain ATCC BAA-98 / CGA009).